We begin with the raw amino-acid sequence, 1319 residues long: Son of sevenless homolog 1 (1319 aa).

Residues 200–390 (TYYDLVKAFM…LNVQSGMEKI (191 aa)) enclose the DH domain. One can recognise a PH domain in the interval 444-548 (FIMEGTLTRV…AALISLQYRS (105 aa)). Residues 597 to 741 (GIPIIKAGTV…SITKIIQRKK (145 aa)) enclose the N-terminal Ras-GEF domain. One can recognise a Ras-GEF domain in the interval 780–1019 (HPIEIARQLT…FNKSLEIEPR (240 aa)). A disordered region spans residues 1019 to 1101 (RHPKPLPRFP…ASGTSSNTDV (83 aa)). Residues serine 1078 and serine 1082 each carry the phosphoserine modification. Serine 1120 and serine 1147 each carry phosphoserine; by RPS6KA3. Positions 1121–1319 (VSSISLSKGT…PPLLENAHSS (199 aa)) are disordered. A phosphoserine mark is found at serine 1164, serine 1196, and serine 1215. Positions 1194 to 1203 (PESPPLLPPR) are enriched in pro residues. The span at 1238 to 1250 (SPSPFTPPPPQTP) shows a compositional bias: pro residues. Serine 1261 bears the Phosphoserine mark. The span at 1296–1309 (YKREHTHPSMHRDG) shows a compositional bias: basic and acidic residues.

As to quaternary structure, interacts (via C-terminus) with GRB2 (via SH3 domain). Forms a complex with phosphorylated MUC1 and GRB2 (via its SH3 domains). Interacts with phosphorylated LAT2. Interacts with NCK1 and NCK2. Part of a complex consisting of ABI1, EPS8 and SOS1. Interacts (Ser-1120 and Ser-1147 phosphorylated form) with YWHAB and YWHAE. Post-translationally, phosphorylation at Ser-1120 and Ser-1147 by RPS6KA3 create YWHAB and YWHAE binding sites and which contribute to the negative regulation of EGF-induced MAPK1/3 phosphorylation. As to expression, expressed in most embryonic and adult tissues.

Promotes the exchange of Ras-bound GDP by GTP. Probably by promoting Ras activation, regulates phosphorylation of MAP kinase MAPK3 in response to EGF. Catalytic component of a trimeric complex that participates in transduction of signals from Ras to Rac by promoting the Rac-specific guanine nucleotide exchange factor (GEF) activity. This Mus musculus (Mouse) protein is Son of sevenless homolog 1 (Sos1).